Here is a 49-residue protein sequence, read N- to C-terminus: Large ribosomal subunit protein bL33B (49 aa).

Belongs to the bacterial ribosomal protein bL33 family.

This is Large ribosomal subunit protein bL33B (rpmG2) from Lactococcus lactis subsp. lactis (strain IL1403) (Streptococcus lactis).